The following is a 335-amino-acid chain: Putative peroxisomal biogenesis factor 19 (335 aa).

2 disordered regions span residues 14-70 (LETQ…LGND) and 104-124 (YNKDINNNSDDSNNGGLPSEE). Low complexity-rich tracts occupy residues 22-55 (PTTTKTTTTTTTTTTSNTTKTINNNNNTVTPSTI) and 109-119 (NNNSDDSNNGG).

The protein belongs to the peroxin-19 family.

Its subcellular location is the peroxisome. This Dictyostelium discoideum (Social amoeba) protein is Putative peroxisomal biogenesis factor 19 (pex19).